The primary structure comprises 287 residues: 2-dehydro-3-deoxyphosphooctonate aldolase (287 aa).

Belongs to the KdsA family.

The protein localises to the cytoplasm. The enzyme catalyses D-arabinose 5-phosphate + phosphoenolpyruvate + H2O = 3-deoxy-alpha-D-manno-2-octulosonate-8-phosphate + phosphate. It participates in carbohydrate biosynthesis; 3-deoxy-D-manno-octulosonate biosynthesis; 3-deoxy-D-manno-octulosonate from D-ribulose 5-phosphate: step 2/3. Its pathway is bacterial outer membrane biogenesis; lipopolysaccharide biosynthesis. The polypeptide is 2-dehydro-3-deoxyphosphooctonate aldolase (Nitrobacter winogradskyi (strain ATCC 25391 / DSM 10237 / CIP 104748 / NCIMB 11846 / Nb-255)).